Consider the following 239-residue polypeptide: Pyridoxine 5'-phosphate synthase (239 aa).

N7 is a 3-amino-2-oxopropyl phosphate binding site. D9–H10 contributes to the 1-deoxy-D-xylulose 5-phosphate binding site. 3-amino-2-oxopropyl phosphate is bound at residue R18. Residue H43 is the Proton acceptor of the active site. 1-deoxy-D-xylulose 5-phosphate-binding residues include R45 and H50. E70 serves as the catalytic Proton acceptor. T100 contributes to the 1-deoxy-D-xylulose 5-phosphate binding site. H191 acts as the Proton donor in catalysis. 3-amino-2-oxopropyl phosphate contacts are provided by residues G192 and G213–H214.

It belongs to the PNP synthase family. As to quaternary structure, homooctamer; tetramer of dimers.

The protein resides in the cytoplasm. The catalysed reaction is 3-amino-2-oxopropyl phosphate + 1-deoxy-D-xylulose 5-phosphate = pyridoxine 5'-phosphate + phosphate + 2 H2O + H(+). It functions in the pathway cofactor biosynthesis; pyridoxine 5'-phosphate biosynthesis; pyridoxine 5'-phosphate from D-erythrose 4-phosphate: step 5/5. In terms of biological role, catalyzes the complicated ring closure reaction between the two acyclic compounds 1-deoxy-D-xylulose-5-phosphate (DXP) and 3-amino-2-oxopropyl phosphate (1-amino-acetone-3-phosphate or AAP) to form pyridoxine 5'-phosphate (PNP) and inorganic phosphate. In Gloeobacter violaceus (strain ATCC 29082 / PCC 7421), this protein is Pyridoxine 5'-phosphate synthase.